A 419-amino-acid polypeptide reads, in one-letter code: Sulfate adenylyltransferase (419 aa).

This sequence belongs to the sulfate adenylyltransferase family.

The enzyme catalyses sulfate + ATP + H(+) = adenosine 5'-phosphosulfate + diphosphate. It functions in the pathway sulfur metabolism; hydrogen sulfide biosynthesis; sulfite from sulfate: step 1/3. The chain is Sulfate adenylyltransferase from Psychrobacter sp. (strain PRwf-1).